The primary structure comprises 113 residues: Protein FPV195 (113 aa).

This sequence belongs to the poxviruses A31 family.

This chain is Protein FPV195, found in Vertebrata (FPV).